A 610-amino-acid chain; its full sequence is Dapper homolog 3 (610 aa).

Ser-6 is subject to Phosphoserine. 3 disordered regions span residues 50–76 (PGMGGAEAEDEEDAEEDEDAAAARRAA), 102–179 (LESG…SVGA), and 200–579 (TCSS…PAGP). The segment covering 56-69 (EAEDEEDAEEDEDA) has biased composition (acidic residues). Residues 63–87 (AEEDEDAAAARRAAAALEEQLEALP) are a coiled coil. A compositionally biased stretch (low complexity) spans 120 to 138 (DPSSTGGPDSPPSTFCGDS). 2 positions are modified to phosphoserine: Ser-165 and Ser-237. Arg-255 is subject to Omega-N-methylarginine. The segment covering 317-331 (PPEPAPPAAASPPSS) has biased composition (pro residues). The span at 344 to 356 (PGAPAASRGLPGR) shows a compositional bias: low complexity. 2 positions are modified to phosphoserine: Ser-409 and Ser-456. The span at 475–485 (PRGPAPSPSAP) shows a compositional bias: pro residues. Positions 524–545 (ESESSASEGESPAFSSASSDSD) are enriched in low complexity. Residues 566 to 576 (GPGGAAGGGTP) show a composition bias toward gly residues. The short motif at 607-610 (MTTV) is the PDZ-binding element.

It belongs to the dapper family. Can form homodimers and heterodimers with DACT1 or DACT3. Interacts with CSNK1D, PKA catalytic subunit, PKC-type kinase, DVL1, DVL2, DVL3, VANGL1, VANGL2 and CTNND1. In terms of tissue distribution, expressed in brain and uterus.

May be involved in regulation of intracellular signaling pathways during development. Specifically thought to play a role in canonical and/or non-canonical Wnt signaling pathways through interaction with DSH (Dishevelled) family proteins. This Mus musculus (Mouse) protein is Dapper homolog 3 (Dact3).